We begin with the raw amino-acid sequence, 842 residues long: 9-beta-pimara-7,15-diene synthase, chloroplastic (842 aa).

The transit peptide at 1 to 56 (MASPMEAVARSSLVLAPRRRRALGLLPAAAAAAPFVLDCRRRHNGGMRRPHVSFAC) directs the protein to the chloroplast. Mg(2+) contacts are provided by Asp591, Asp595, Asn735, Ser739, and Glu743. The DDXXD motif motif lies at 591–595 (DDFFD).

It belongs to the terpene synthase family. Requires Mg(2+) as cofactor. In terms of tissue distribution, expressed in roots.

The protein localises to the plastid. Its subcellular location is the chloroplast. It catalyses the reaction 9alpha-copalyl diphosphate = 9beta-pimara-7,15-diene + diphosphate. Its function is as follows. Involved in the biosynthesis of momilactone A and B phytoalexins. Catalyzes the conversion of syn-copalyl diphosphate to the phytoalexin precursor syn-pimara-7,15-diene. This is 9-beta-pimara-7,15-diene synthase, chloroplastic from Oryza sativa subsp. japonica (Rice).